The sequence spans 579 residues: Zinc finger protein 382 (579 aa).

Over residues 1–12 the composition is skewed to basic residues; it reads MGRPGRKPRGRA. A disordered region spans residues 1-37; the sequence is MGRPGRKPRGRARPGLFPFPKEELRQGGSSPANLNAM. The mediates interaction with TRIM28 stretch occupies residues 12–135; that stretch reads ARPGLFPFPK…DKPPKSIVII (124 aa). The segment covering 27 to 36 has biased composition (polar residues); sequence GGSSPANLNA. Represses transcription stretches follow at residues 40–81 and 105–240; these read GPVS…FISV and IFPS…PEQR. In terms of domain architecture, KRAB spans 42–113; it reads VSFKDVTVDF…RIFPSQSYLE (72 aa). The C2H2-type 1; degenerate zinc finger occupies 241–263; the sequence is FEYNKCDSSFLMTGVEFPHGRAH. 9 consecutive C2H2-type zinc fingers follow at residues 325 to 347, 353 to 375, 381 to 403, 409 to 431, 437 to 459, 465 to 487, 493 to 515, 521 to 543, and 549 to 571; these read FQCP…ERIH, YICC…EKTH, YLCV…HKAH, YECT…QRTH, YQCT…QRTH, YICS…QRIH, YICS…YRIH, NGCP…QKIH, and YECQ…QKTH. The tract at residues 325 to 579 is required for transcriptional repression activity; probably mediates sequence-specific DNA-binding; it reads FQCPYCGNSF…THKTETMRFQ (255 aa).

It belongs to the krueppel C2H2-type zinc-finger protein family. In terms of assembly, interacts with TRIM28; enhances the transcriptional repressor activity.

The protein localises to the nucleus. Functionally, functions as a sequence-specific transcriptional repressor. The polypeptide is Zinc finger protein 382 (Znf382) (Mus musculus (Mouse)).